The sequence spans 66 residues: Large ribosomal subunit protein bL35 (66 aa).

Positions 18–27 (ATGKIKSTQS) are enriched in polar residues. The tract at residues 18 to 41 (ATGKIKSTQSAKRHGMTKRSKRSI) is disordered. Positions 28 to 41 (AKRHGMTKRSKRSI) are enriched in basic residues.

The protein belongs to the bacterial ribosomal protein bL35 family.

The chain is Large ribosomal subunit protein bL35 from Ehrlichia ruminantium (strain Gardel).